The primary structure comprises 97 residues: Co-chaperonin GroES (97 aa).

This sequence belongs to the GroES chaperonin family. Heptamer of 7 subunits arranged in a ring. Interacts with the chaperonin GroEL.

The protein resides in the cytoplasm. Its function is as follows. Together with the chaperonin GroEL, plays an essential role in assisting protein folding. The GroEL-GroES system forms a nano-cage that allows encapsulation of the non-native substrate proteins and provides a physical environment optimized to promote and accelerate protein folding. GroES binds to the apical surface of the GroEL ring, thereby capping the opening of the GroEL channel. This is Co-chaperonin GroES from Buchnera aphidicola subsp. Tetraneura caerulescens.